The primary structure comprises 800 residues: Phosphate transporter PHO1 homolog 9 (800 aa).

The region spanning Met1 to Asn346 is the SPX domain. At Met1 to Thr398 the chain is on the cytoplasmic side. Disordered regions lie at residues Gln38 to Ser77, Asn91 to His119, and Pro212 to Ser234. Over residues Arg42–Ser51 the composition is skewed to pro residues. Positions Gly63–Gly75 are enriched in gly residues. Residues Arg95–His119 are compositionally biased toward basic residues. Polar residues predominate over residues Ser216–Arg229. A helical transmembrane segment spans residues Tyr399–Val419. Over His420–Pro439 the chain is Extracellular. The chain crosses the membrane as a helical span at residues Leu440–Phe460. The Cytoplasmic segment spans residues Trp461–Arg483. A helical transmembrane segment spans residues Glu484–Leu504. The Extracellular portion of the chain corresponds to Asp505–Glu520. A helical transmembrane segment spans residues Leu521–Ile541. Residues Tyr542–Trp670 lie on the Cytoplasmic side of the membrane. The region spanning Tyr606–Val800 is the EXS domain. The helical transmembrane segment at Leu671 to Phe691 threads the bilayer. Over Arg692–Tyr718 the chain is Extracellular. The helical transmembrane segment at Phe719–Ile739 threads the bilayer. Residues Lys740–Val800 are Cytoplasmic-facing.

This sequence belongs to the SYG1 (TC 2.A.94) family. In terms of tissue distribution, specifically expressed in pollen grains.

Its subcellular location is the cell membrane. In terms of biological role, may transport inorganic phosphate (Pi). This is Phosphate transporter PHO1 homolog 9 (PHO1-H9) from Arabidopsis thaliana (Mouse-ear cress).